The following is a 517-amino-acid chain: 2,4,6-trichlorophenol monooxygenase (517 aa).

It belongs to the FADH(2)-utilizing monooxygenase family. As to quaternary structure, homotetramer in solution.

The enzyme catalyses 2,4,6-trichlorophenol + FADH2 + O2 = 2-chloro-6-hydroxy-1,4-benzoquinone + FAD + 2 chloride + 3 H(+). The catalysed reaction is 2,4,6-trichlorophenol + FADH2 + O2 = 2,6-dichlorobenzoquinone + FAD + chloride + H2O + H(+). It carries out the reaction 2,6-dichlorobenzoquinone + H2O = 2-chloro-6-hydroxy-1,4-benzoquinone + chloride + 2 H(+). It functions in the pathway aromatic compound metabolism. Its pathway is xenobiotic degradation. Functionally, involved in the degradation of 2,4,6-trichlorophenol (2,4,6-TCP). Catalyzes the conversion of 2,4,6-TCP to 6-chlorohydroxyquinol (6-CHQ). The monooxygenase oxidizes 2,4,6-TCP to 2,6-dichloroquinone (2,6-DCBQ), which remains with the enzyme and is hydrolyzed to 2-chlorohydroxyquinone. 2-chlorohydroxyquinone is chemically reduced by ascorbate and NADH to 6-chlorohydroxyquinol (6-CHQ). This Cupriavidus pinatubonensis (strain JMP 134 / LMG 1197) (Cupriavidus necator (strain JMP 134)) protein is 2,4,6-trichlorophenol monooxygenase.